The following is a 115-amino-acid chain: Ig kappa chain V region 3315 (115 aa).

The interval 1–24 is framework-1; sequence AQIVMTQTPSSVSAAVGGTVTINC. Positions 25 to 37 are complementarity-determining-1; that stretch reads QSSQSVYENGRLS. The interval 38-52 is framework-2; sequence WFQQKPGQPPKRLIY. The tract at residues 53–59 is complementarity-determining-2; that stretch reads RASTLAS. Residues 60 to 91 are framework-3; it reads GVSSRFTGSGSGTQFTLSISDVQCDDAATYYC. A complementarity-determining-3 region spans residues 92 to 104; that stretch reads LGNYDCSSGDSFT. A framework-4 region spans residues 105 to 114; it reads FGGGTEVVVK.

This is Ig kappa chain V region 3315 from Oryctolagus cuniculus (Rabbit).